The primary structure comprises 142 residues: Small ribosomal subunit protein eS6 (142 aa).

Positions 117–142 (EKPLDELAPKKEKKEGAAGGRAPAKK) are disordered. Residues 118-132 (KPLDELAPKKEKKEG) are compositionally biased toward basic and acidic residues.

It belongs to the eukaryotic ribosomal protein eS6 family.

This chain is Small ribosomal subunit protein eS6, found in Methanocella arvoryzae (strain DSM 22066 / NBRC 105507 / MRE50).